The chain runs to 127 residues: Fluoride-specific ion channel FluC (127 aa).

4 helical membrane passes run 4–24, 35–55, 71–91, and 99–119; these read FTLL…RYLI, GFPY…GILM, IIGL…MDNV, and FIKA…ACFI. 2 residues coordinate Na(+): G78 and T81.

Belongs to the fluoride channel Fluc/FEX (TC 1.A.43) family.

It is found in the cell inner membrane. It carries out the reaction fluoride(in) = fluoride(out). Na(+) is not transported, but it plays an essential structural role and its presence is essential for fluoride channel function. Its function is as follows. Fluoride-specific ion channel. Important for reducing fluoride concentration in the cell, thus reducing its toxicity. This chain is Fluoride-specific ion channel FluC, found in Photobacterium profundum (strain SS9).